Here is a 251-residue protein sequence, read N- to C-terminus: 1-(5-phosphoribosyl)-5-[(5-phosphoribosylamino)methylideneamino] imidazole-4-carboxamide isomerase (251 aa).

Residue Asp-7 is the Proton acceptor of the active site. Asp-131 functions as the Proton donor in the catalytic mechanism.

It belongs to the HisA/HisF family.

It is found in the cytoplasm. The catalysed reaction is 1-(5-phospho-beta-D-ribosyl)-5-[(5-phospho-beta-D-ribosylamino)methylideneamino]imidazole-4-carboxamide = 5-[(5-phospho-1-deoxy-D-ribulos-1-ylimino)methylamino]-1-(5-phospho-beta-D-ribosyl)imidazole-4-carboxamide. The protein operates within amino-acid biosynthesis; L-histidine biosynthesis; L-histidine from 5-phospho-alpha-D-ribose 1-diphosphate: step 4/9. The protein is 1-(5-phosphoribosyl)-5-[(5-phosphoribosylamino)methylideneamino] imidazole-4-carboxamide isomerase of Blochmanniella floridana.